A 304-amino-acid chain; its full sequence is MALSPSVVPQESEENNANCVETKQSQTASTASEDPLQHLCLASQEVLHKAQQSGRSRCLQCGGSRMFYCYTCYVPVENVPTEQIPFVQLPLKIDIIKHPNETDGKSTAVHAKLLAPDSVNIYTYPCIPEYEGQDHEVVLVFPGPQSISIKDVSFHLQKRIESKGGDKADDLDMPPRKLVRTEAQEGWHLNESMGKGPELKRVVFIDSTWSQTNQITSDERLRELLQVELKTRKTCFWRHQKGKPDTFLSTIEAIYYFLVDYHRAVQKEEYRGQYDNLLFFYSFMYRLIKEARRSGEKAKQKPIH.

The interval 1 to 30 (MALSPSVVPQESEENNANCVETKQSQTAST) is disordered. Residues 15–30 (NNANCVETKQSQTAST) are compositionally biased toward polar residues. Positions 206 to 209 (DSTW) match the DXTW motif.

Belongs to the TDD superfamily. DTWD1 family.

The protein localises to the nucleus. The enzyme catalyses a uridine in tRNA + S-adenosyl-L-methionine = a 3-[(3S)-3-amino-3-carboxypropyl]uridine in tRNA + S-methyl-5'-thioadenosine + H(+). Functionally, catalyzes the formation of 3-(3-amino-3-carboxypropyl)uridine (acp3U) at position 20 in the D-loop of several cytoplasmic tRNAs (acp3U(20)). In Rattus norvegicus (Rat), this protein is tRNA-uridine aminocarboxypropyltransferase 1.